The primary structure comprises 209 residues: MESTEKLTDTNAILAYLYETFPLCFIAEGETKPLKIGLFQDLAERLADDSKVSKTQLRVALRRYTSSWRYLKCVKAGAQRVNLDGEPCGELEQEHIDHAQAMLKESQDKAKAKRAALAPKPAAKKAPKKVAVPQRAKTERPAKPAPKAAAPVVNYVQAQLTDLTKKQRVNVKLGMTPVAGVITDINKEDIHVQLDSGLTIKVRAEHILL.

The tract at residues 105 to 148 is disordered; that stretch reads ESQDKAKAKRAALAPKPAAKKAPKKVAVPQRAKTERPAKPAPKA.

This sequence belongs to the ProQ family.

The protein resides in the cytoplasm. Its function is as follows. RNA chaperone with significant RNA binding, RNA strand exchange and RNA duplexing activities. This is RNA chaperone ProQ from Shewanella baltica (strain OS223).